The following is a 92-amino-acid chain: Cell division protein FtsB (92 aa).

Over 1 to 3 (MKW) the chain is Cytoplasmic. A helical membrane pass occupies residues 4–21 (VTVVLSFALVCCQYSLWF). Residues 22–92 (GKGSIGRNSS…TFYRLIRHNR (71 aa)) lie on the Periplasmic side of the membrane. Residues 28-50 (RNSSLREQIAVQEEKNQTLALRN) are a coiled coil.

Belongs to the FtsB family. Part of a complex composed of FtsB, FtsL and FtsQ.

It localises to the cell inner membrane. In terms of biological role, essential cell division protein. May link together the upstream cell division proteins, which are predominantly cytoplasmic, with the downstream cell division proteins, which are predominantly periplasmic. The chain is Cell division protein FtsB from Neisseria meningitidis serogroup C (strain 053442).